A 436-amino-acid chain; its full sequence is Glutamyl-tRNA reductase (436 aa).

Substrate-binding positions include 49 to 52 (TCNR), S109, 114 to 116 (EGQ), and Q120. C50 (nucleophile) is an active-site residue. Residue 198–203 (GAGRMS) participates in NADP(+) binding.

It belongs to the glutamyl-tRNA reductase family. As to quaternary structure, homodimer.

The enzyme catalyses (S)-4-amino-5-oxopentanoate + tRNA(Glu) + NADP(+) = L-glutamyl-tRNA(Glu) + NADPH + H(+). It participates in porphyrin-containing compound metabolism; protoporphyrin-IX biosynthesis; 5-aminolevulinate from L-glutamyl-tRNA(Glu): step 1/2. Its pathway is porphyrin-containing compound metabolism; chlorophyll biosynthesis. In terms of biological role, catalyzes the NADPH-dependent reduction of glutamyl-tRNA(Glu) to glutamate 1-semialdehyde (GSA). In Prochlorococcus marinus (strain MIT 9215), this protein is Glutamyl-tRNA reductase.